The following is a 337-amino-acid chain: Dihydroorotate dehydrogenase (quinone) (337 aa).

Residues 58-62 and Thr82 contribute to the FMN site; that span reads AGLDK. Lys62 provides a ligand contact to substrate. A substrate-binding site is contributed by 107 to 111; it reads NCMGF. FMN is bound by residues Asn137 and Asn170. Asn170 lines the substrate pocket. Ser173 acts as the Nucleophile in catalysis. A substrate-binding site is contributed by Asn175. Lys215 and Thr243 together coordinate FMN. 244-245 lines the substrate pocket; it reads NT. Residues Gly266, Gly294, and 315 to 316 contribute to the FMN site; that span reads YS.

Belongs to the dihydroorotate dehydrogenase family. Type 2 subfamily. In terms of assembly, monomer. FMN is required as a cofactor.

The protein resides in the cell membrane. The catalysed reaction is (S)-dihydroorotate + a quinone = orotate + a quinol. Its pathway is pyrimidine metabolism; UMP biosynthesis via de novo pathway; orotate from (S)-dihydroorotate (quinone route): step 1/1. Catalyzes the conversion of dihydroorotate to orotate with quinone as electron acceptor. The protein is Dihydroorotate dehydrogenase (quinone) of Dichelobacter nodosus (strain VCS1703A).